The primary structure comprises 431 residues: ABSCISIC ACID-INSENSITIVE 5-like protein 7 (431 aa).

Residues 1–29 (MGTHINFNNLGGGGHPGGEGSSNQMKPTG) are disordered. The span at 10 to 20 (LGGGGHPGGEG) shows a compositional bias: gly residues. Residues S39 and S61 each carry the phosphoserine modification. S110 is modified (phosphoserine; by CPK32). Residues 133 to 153 (DGNMEGSSGGGGESNVPPGRQ) are disordered. Residue T155 is modified to Phosphothreonine. Over residues 319 to 331 (SPGTSSAENNSLS) the composition is skewed to polar residues. The segment at 319–338 (SPGTSSAENNSLSPVPYVLN) is disordered. A Nuclear localization signal motif is present at residues 340–347 (GRRSNTGL). A bZIP domain is found at 351–414 (IERRQRRMIK…KNELKETSKR (64 aa)). The interval 353–372 (RRQRRMIKNRESAARSRARK) is basic motif. The stretch at 372-411 (KQAYTLELEAEIEKLKKTNQELQKKQAEMVEMQKNELKET) forms a coiled coil. The leucine-zipper stretch occupies residues 379–393 (LEAEIEKLKKTNQEL).

The protein belongs to the bZIP family. ABI5 subfamily. DNA-binding heterodimer. Interacts with CPK32 and the AFP proteins AFP1, AFP2 and AFP3. Interacts with FREE1 (via C-terminus). In terms of processing, phosphorylated by CPK4 and CPK11 in vitro. In terms of tissue distribution, expressed in roots, leaves, flowers and immatures siliques.

Its subcellular location is the nucleus. Functions as a transcriptional activator in the ABA-inducible expression of LTI65/RD29B (AC Q04980). Binds specifically to the ABA-responsive element (ABRE) of the LTI65/RD29B (AC Q04980) gene promoter. Binds to the promoter of FREE1 and activates its transcription. This chain is ABSCISIC ACID-INSENSITIVE 5-like protein 7, found in Arabidopsis thaliana (Mouse-ear cress).